Reading from the N-terminus, the 450-residue chain is Glucose-6-phosphate isomerase (450 aa).

Glu-291 (proton donor) is an active-site residue. Active-site residues include His-312 and Lys-426.

The protein belongs to the GPI family.

Its subcellular location is the cytoplasm. The catalysed reaction is alpha-D-glucose 6-phosphate = beta-D-fructose 6-phosphate. Its pathway is carbohydrate biosynthesis; gluconeogenesis. It functions in the pathway carbohydrate degradation; glycolysis; D-glyceraldehyde 3-phosphate and glycerone phosphate from D-glucose: step 2/4. Its function is as follows. Catalyzes the reversible isomerization of glucose-6-phosphate to fructose-6-phosphate. In Clostridium botulinum (strain Loch Maree / Type A3), this protein is Glucose-6-phosphate isomerase.